A 255-amino-acid chain; its full sequence is Aliphatic sulfonates import ATP-binding protein SsuB (255 aa).

The 222-residue stretch at 12 to 233 folds into the ABC transporter domain; sequence LLLNAVSKHY…RLGSVRLAEL (222 aa). 44–51 contacts ATP; it reads GRSGGGKS.

This sequence belongs to the ABC transporter superfamily. Aliphatic sulfonates importer (TC 3.A.1.17.2) family. In terms of assembly, the complex is composed of two ATP-binding proteins (SsuB), two transmembrane proteins (SsuC) and a solute-binding protein (SsuA).

Its subcellular location is the cell inner membrane. It catalyses the reaction ATP + H2O + aliphatic sulfonate-[sulfonate-binding protein]Side 1 = ADP + phosphate + aliphatic sulfonateSide 2 + [sulfonate-binding protein]Side 1.. Functionally, part of the ABC transporter complex SsuABC involved in aliphatic sulfonates import. Responsible for energy coupling to the transport system. The sequence is that of Aliphatic sulfonates import ATP-binding protein SsuB from Shigella flexneri serotype 5b (strain 8401).